The following is a 178-amino-acid chain: uncharacterized protein (178 aa).

The signal sequence occupies residues 1–19 (MINRKILLTSLLLIFTVLS). Catalysis depends on residues Arg52, Glu60, and Arg94.

Belongs to the thermonuclease family.

This is an uncharacterized protein from Haemophilus influenzae (strain ATCC 51907 / DSM 11121 / KW20 / Rd).